The sequence spans 572 residues: EF-hand calcium-binding domain-containing protein 12 (572 aa).

2 disordered regions span residues 62-85 (VPRKEDQTPLNPASQPQAPPKPIP) and 146-169 (EQSAQPNASQATTRTTRKKAPRLS). In terms of domain architecture, EF-hand spans 196-231 (SRKIKILEIFHKVGQGENQRITREEFIAAVKAVGVP). Residue Glu212 participates in Ca(2+) binding.

This chain is EF-hand calcium-binding domain-containing protein 12 (EFCAB12), found in Homo sapiens (Human).